Reading from the N-terminus, the 567-residue chain is uncharacterized protein (567 aa).

12 helical membrane-spanning segments follow: residues 136 to 156 (LFCLGCLWCYFSSGMVSLIFA), 159 to 179 (FMGIGGGGLITLSTIINSDII), 193 to 213 (LLLGFGAICGASFGGVLSEVF), 217 to 237 (LCFLVQVPFSVLSIAVGFFFV), 258 to 278 (ILGGLLLVSGLTSLLLVLTFG), 291 to 311 (LLLLLGILCIVAFVYVESITE), 334 to 354 (FLIGLAGYAYLFTLPLFFQLV), 364 to 384 (LRLALPSLSTPIGGLICGILM), 393 to 415 (LLFSGVFLMSLGYFLSLFIHPGI), 426 to 446 (PANVGQGIGFPSSLFSFIFAF), 457 to 477 (TLYLIRSIGSLFGVGGLSAVI), and 536 to 553 (AQQFTTICCVLALGLCIL).

The protein belongs to the major facilitator superfamily.

Its subcellular location is the membrane. This is an uncharacterized protein from Schizosaccharomyces pombe (strain 972 / ATCC 24843) (Fission yeast).